A 220-amino-acid chain; its full sequence is Kinetochore protein Spc25 (220 aa).

The stretch at 41–119 (ILLDVKEAAA…NEIMERIHTL (79 aa)) forms a coiled coil.

The protein belongs to the SPC25 family. Component of the Ndc80 complex, which is composed of Ndc80, Nuf2 and Spc25.

The protein resides in the nucleus. It is found in the chromosome. The protein localises to the centromere. It localises to the kinetochore. Its function is as follows. Acts as a component of the essential kinetochore-associated Ndc80 complex, which is required for chromosome segregation and spindle checkpoint activity during meiosis and mitosis. Required for kinetochore integrity and the organization of stable microtubule binding sites in the outer plate of the kinetochore. Participates in SAC signaling that responds specifically to disruptions in spindle microtubule dynamics. The NDC80 complex synergistically enhances the affinity of the SKA1 complex for microtubules and may allow the NDC80 complex to track depolymerizing microtubules. The sequence is that of Kinetochore protein Spc25 from Drosophila erecta (Fruit fly).